Consider the following 96-residue polypeptide: Small ribosomal subunit protein bS6 (96 aa).

It belongs to the bacterial ribosomal protein bS6 family.

Its function is as follows. Binds together with bS18 to 16S ribosomal RNA. The chain is Small ribosomal subunit protein bS6 from Mycobacteroides abscessus (strain ATCC 19977 / DSM 44196 / CCUG 20993 / CIP 104536 / JCM 13569 / NCTC 13031 / TMC 1543 / L948) (Mycobacterium abscessus).